The sequence spans 542 residues: Peptide chain release factor 3 (542 aa).

Residues 14-283 (ELRRNFAIIS…YFLEYALKPG (270 aa)) form the tr-type G domain. GTP-binding positions include 23 to 30 (SHPDAGKT), 91 to 95 (DTPGH), and 145 to 148 (NKLD).

This sequence belongs to the TRAFAC class translation factor GTPase superfamily. Classic translation factor GTPase family. PrfC subfamily.

The protein resides in the cytoplasm. Functionally, increases the formation of ribosomal termination complexes and stimulates activities of RF-1 and RF-2. It binds guanine nucleotides and has strong preference for UGA stop codons. It may interact directly with the ribosome. The stimulation of RF-1 and RF-2 is significantly reduced by GTP and GDP, but not by GMP. The chain is Peptide chain release factor 3 from Nostoc punctiforme (strain ATCC 29133 / PCC 73102).